The sequence spans 82 residues: Exodeoxyribonuclease 7 small subunit (82 aa).

The protein belongs to the XseB family. In terms of assembly, heterooligomer composed of large and small subunits.

It localises to the cytoplasm. It catalyses the reaction Exonucleolytic cleavage in either 5'- to 3'- or 3'- to 5'-direction to yield nucleoside 5'-phosphates.. In terms of biological role, bidirectionally degrades single-stranded DNA into large acid-insoluble oligonucleotides, which are then degraded further into small acid-soluble oligonucleotides. This chain is Exodeoxyribonuclease 7 small subunit, found in Mannheimia succiniciproducens (strain KCTC 0769BP / MBEL55E).